The chain runs to 281 residues: Sulfur carrier protein FdhD (281 aa).

The Cysteine persulfide intermediate role is filled by Cys-127. 264–269 (FAREGR) is a Mo-bis(molybdopterin guanine dinucleotide) binding site.

It belongs to the FdhD family.

Its subcellular location is the cytoplasm. Its function is as follows. Required for formate dehydrogenase (FDH) activity. Acts as a sulfur carrier protein that transfers sulfur from IscS to the molybdenum cofactor prior to its insertion into FDH. This is Sulfur carrier protein FdhD from Mannheimia succiniciproducens (strain KCTC 0769BP / MBEL55E).